Consider the following 65-residue polypeptide: Metallothionein (65 aa).

It belongs to the metallothionein superfamily. Type 4 family.

Functionally, metallothioneins have a high content of cysteine residues that bind various heavy metals. The sequence is that of Metallothionein from Paracentrotus lividus (Common sea urchin).